Consider the following 66-residue polypeptide: Clarkitoxin-1 (66 aa).

4 disulfide bridges follow: C3/C24, C17/C42, C46/C59, and C60/C65.

Expressed by the venom gland.

It is found in the secreted. In terms of biological role, not toxic to mice when injected intravenously or intraperitoneally. In Micrurus clarki (Clark's coral snake), this protein is Clarkitoxin-1.